The sequence spans 154 residues: Large ribosomal subunit protein uL13 (154 aa).

The protein belongs to the universal ribosomal protein uL13 family. As to quaternary structure, part of the 50S ribosomal subunit.

This protein is one of the early assembly proteins of the 50S ribosomal subunit, although it is not seen to bind rRNA by itself. It is important during the early stages of 50S assembly. This is Large ribosomal subunit protein uL13 from Bartonella quintana (strain Toulouse) (Rochalimaea quintana).